The primary structure comprises 371 residues: Carbamoyl phosphate synthase small chain (371 aa).

The segment at 1 to 182 (MGVHKKGYLV…KNPIVHTPKN (182 aa)) is CPSase. Serine 49, glycine 235, and glycine 237 together coordinate L-glutamine. The region spanning 186 to 371 (RVVVLDLGVK…EFVKILEGRK (186 aa)) is the Glutamine amidotransferase type-1 domain. Cysteine 263 (nucleophile) is an active-site residue. L-glutamine is bound by residues leucine 264, glutamine 267, asparagine 305, glycine 307, and tyrosine 308. Active-site residues include histidine 346 and glutamate 348.

The protein belongs to the CarA family. In terms of assembly, composed of two chains; the small (or glutamine) chain promotes the hydrolysis of glutamine to ammonia, which is used by the large (or ammonia) chain to synthesize carbamoyl phosphate. Tetramer of heterodimers (alpha,beta)4.

The catalysed reaction is hydrogencarbonate + L-glutamine + 2 ATP + H2O = carbamoyl phosphate + L-glutamate + 2 ADP + phosphate + 2 H(+). The enzyme catalyses L-glutamine + H2O = L-glutamate + NH4(+). Its pathway is amino-acid biosynthesis; L-arginine biosynthesis; carbamoyl phosphate from bicarbonate: step 1/1. The protein operates within pyrimidine metabolism; UMP biosynthesis via de novo pathway; (S)-dihydroorotate from bicarbonate: step 1/3. Its function is as follows. Small subunit of the glutamine-dependent carbamoyl phosphate synthetase (CPSase). CPSase catalyzes the formation of carbamoyl phosphate from the ammonia moiety of glutamine, carbonate, and phosphate donated by ATP, constituting the first step of 2 biosynthetic pathways, one leading to arginine and/or urea and the other to pyrimidine nucleotides. The small subunit (glutamine amidotransferase) binds and cleaves glutamine to supply the large subunit with the substrate ammonia. This Pyrococcus furiosus (strain ATCC 43587 / DSM 3638 / JCM 8422 / Vc1) protein is Carbamoyl phosphate synthase small chain.